The following is a 516-amino-acid chain: Protein psiC (516 aa).

The first 19 residues, 1 to 19, serve as a signal peptide directing secretion; that stretch reads MKILILSFFLILGINLVFC. Residues 109 to 249 form the PA14 domain; sequence ESKDEPGIYV…YDACGVCLGK (141 aa). N134, N234, N250, N284, N333, N357, and N367 each carry an N-linked (GlcNAc...) asparagine glycan. Residues 418-427 are compositionally biased toward low complexity; sequence DIIIDSSSDI. Residues 418–465 form a disordered region; sequence DIIIDSSSDIPIPTLSPSPQPSRFPTDTPTNTPMPPTRPPTPTEDPKI. The span at 449–460 shows a compositional bias: pro residues; the sequence is TPMPPTRPPTPT.

The protein belongs to the prespore-cell-inducing factor family.

Its subcellular location is the secreted. This Dictyostelium discoideum (Social amoeba) protein is Protein psiC (psiC).